A 42-amino-acid polypeptide reads, in one-letter code: Large ribosomal subunit protein P2 (42 aa).

This sequence belongs to the eukaryotic ribosomal protein P1/P2 family. In terms of assembly, P1 and P2 exist as dimers at the large ribosomal subunit. Post-translationally, phosphorylated.

Functionally, plays an important role in the elongation step of protein synthesis. This chain is Large ribosomal subunit protein P2, found in Triticum aestivum (Wheat).